A 394-amino-acid chain; its full sequence is Probable pectate lyase 16 (394 aa).

The N-terminal stretch at M1 to A22 is a signal peptide. 3 residues coordinate Ca(2+): D192, D216, and D220. Residue R272 is part of the active site.

This sequence belongs to the polysaccharide lyase 1 family. It depends on Ca(2+) as a cofactor.

It carries out the reaction Eliminative cleavage of (1-&gt;4)-alpha-D-galacturonan to give oligosaccharides with 4-deoxy-alpha-D-galact-4-enuronosyl groups at their non-reducing ends.. The protein operates within glycan metabolism; pectin degradation; 2-dehydro-3-deoxy-D-gluconate from pectin: step 2/5. This Arabidopsis thaliana (Mouse-ear cress) protein is Probable pectate lyase 16.